The sequence spans 115 residues: Ribonuclease P protein component (115 aa).

It belongs to the RnpA family. In terms of assembly, consists of a catalytic RNA component (M1 or rnpB) and a protein subunit.

It carries out the reaction Endonucleolytic cleavage of RNA, removing 5'-extranucleotides from tRNA precursor.. RNaseP catalyzes the removal of the 5'-leader sequence from pre-tRNA to produce the mature 5'-terminus. It can also cleave other RNA substrates such as 4.5S RNA. The protein component plays an auxiliary but essential role in vivo by binding to the 5'-leader sequence and broadening the substrate specificity of the ribozyme. The sequence is that of Ribonuclease P protein component from Staphylococcus carnosus (strain TM300).